The primary structure comprises 269 residues: 4-hydroxy-tetrahydrodipicolinate reductase (269 aa).

NAD(+) is bound by residues 10-15, Glu36, 99-101, and 123-126; these read GANGRM, GTT, and AANF. Residue His156 is the Proton donor/acceptor of the active site. Residue His157 participates in (S)-2,3,4,5-tetrahydrodipicolinate binding. Residue Lys160 is the Proton donor of the active site. A (S)-2,3,4,5-tetrahydrodipicolinate-binding site is contributed by 166–167; sequence GT.

This sequence belongs to the DapB family.

It localises to the cytoplasm. The enzyme catalyses (S)-2,3,4,5-tetrahydrodipicolinate + NAD(+) + H2O = (2S,4S)-4-hydroxy-2,3,4,5-tetrahydrodipicolinate + NADH + H(+). It catalyses the reaction (S)-2,3,4,5-tetrahydrodipicolinate + NADP(+) + H2O = (2S,4S)-4-hydroxy-2,3,4,5-tetrahydrodipicolinate + NADPH + H(+). It participates in amino-acid biosynthesis; L-lysine biosynthesis via DAP pathway; (S)-tetrahydrodipicolinate from L-aspartate: step 4/4. In terms of biological role, catalyzes the conversion of 4-hydroxy-tetrahydrodipicolinate (HTPA) to tetrahydrodipicolinate. This Neisseria gonorrhoeae (strain ATCC 700825 / FA 1090) protein is 4-hydroxy-tetrahydrodipicolinate reductase.